The chain runs to 706 residues: MNKIRSLRCLLPETITSASTAASNRGSDGSQFSVLWRHQILDPDSNIVTYWNHVFLITSILALFLDPFYFYVPYVGGPACLSIDISLAATVTFFRTVADIFHLLHIFMKFRTAFVARSSRVFGRGELVMDSREIAMRYLKTDFLIDVAAMLPLPQLVIWLVIPAATNGTANHANSTLALIVLVQYIPRSFIIFPLNQRIIKTTGFIAKTAWAGAAYNLLLYILASHVLGAMWYLSSIGRQFSCWSNVCKKDNALRVLDCLPSFLDCKSLEQPERQYWQNVTQVLSHCDATSSTTNFKFGMFAEAFTTQVATTDFVSKYLYCLWWGLRNLSSYGQNITTSVYLGETLFCITICIFGLILFTLLIGNMQSSLQSMSVRVEEWRVKRRDTEEWMRHRQLPPELQERVRRFVQYKWLATRGVDEESILHSLPTDLRREIQRHLCLSLVRRVPFFSQMDDQLLDAICGCLVSSLSTAGTYIFREGDPVNEMLFVIRGQIESSTTNGGRSGFFNSTTLRPGDFCGEELLTWALMPNSTLNLPSSTRSVRALSEVEAFALSAEDLKFVAHQFKRLQSKKLQHAFRYYSHQWRAWGACFVQSAWRRYKRRKLAKELSLHESSGYYYPDETGYNEEDEETREYYYGSDEEGGSMDNTNLGATILASKFAANTRRGTNQKASSSSTGKKDGSSTSLKMPQLFKPDEPDFSIDKEDV.

Over 1 to 53 the chain is Cytoplasmic; that stretch reads MNKIRSLRCLLPETITSASTAASNRGSDGSQFSVLWRHQILDPDSNIVTYWNH. Residues 54 to 74 form a helical membrane-spanning segment; it reads VFLITSILALFLDPFYFYVPY. Over 75–86 the chain is Extracellular; sequence VGGPACLSIDIS. The chain crosses the membrane as a helical span at residues 87–107; the sequence is LAATVTFFRTVADIFHLLHIF. Residues 108-142 are Cytoplasmic-facing; the sequence is MKFRTAFVARSSRVFGRGELVMDSREIAMRYLKTD. Residues 143–163 form a helical membrane-spanning segment; the sequence is FLIDVAAMLPLPQLVIWLVIP. Topologically, residues 164-174 are extracellular; it reads AATNGTANHAN. A helical membrane pass occupies residues 175–195; sequence STLALIVLVQYIPRSFIIFPL. Residues 196 to 217 lie on the Cytoplasmic side of the membrane; that stretch reads NQRIIKTTGFIAKTAWAGAAYN. The chain crosses the membrane as a helical span at residues 218–238; sequence LLLYILASHVLGAMWYLSSIG. The Extracellular portion of the chain corresponds to 239-345; that stretch reads RQFSCWSNVC…ITTSVYLGET (107 aa). The helical transmembrane segment at 346–366 threads the bilayer; that stretch reads LFCITICIFGLILFTLLIGNM. Topologically, residues 367-706 are cytoplasmic; it reads QSSLQSMSVR…PDFSIDKEDV (340 aa). A nucleoside 3',5'-cyclic phosphate contacts are provided by residues 449-579 and Glu520; that span reads FFSQ…AFRY. The interval 565 to 580 is calmodulin-binding; the sequence is FKRLQSKKLQHAFRYY. The region spanning 585–614 is the IQ domain; it reads RAWGACFVQSAWRRYKRRKLAKELSLHESS. Positions 661 to 706 are disordered; sequence ANTRRGTNQKASSSSTGKKDGSSTSLKMPQLFKPDEPDFSIDKEDV. The span at 693–706 shows a compositional bias: basic and acidic residues; sequence KPDEPDFSIDKEDV.

This sequence belongs to the cyclic nucleotide-gated cation channel (TC 1.A.1.5) family. In terms of assembly, homomultimer. Interacts with CPK32. As to expression, expressed in pollen grains. Not detected in leaves, roots or root hairs.

The protein localises to the cell membrane. It is found in the cytoplasmic vesicle membrane. In terms of biological role, cyclic nucleotide-gated ion channel required for directional pollen tube growth into the transmitting tract. Acts as a Ca(2+)-permeable divalent cation-selective channel inhibited by either lanthanum or gadolinium. Regulated by CPK32 to mediate Ca(2+) transport across the plasma membrane in response to Ca(2+) oscillation. The polypeptide is Cyclic nucleotide-gated ion channel 18 (Arabidopsis thaliana (Mouse-ear cress)).